We begin with the raw amino-acid sequence, 207 residues long: Protein GrpE (207 aa).

The interval M1 to A31 is disordered.

This sequence belongs to the GrpE family. As to quaternary structure, homodimer.

The protein resides in the cytoplasm. Participates actively in the response to hyperosmotic and heat shock by preventing the aggregation of stress-denatured proteins, in association with DnaK and GrpE. It is the nucleotide exchange factor for DnaK and may function as a thermosensor. Unfolded proteins bind initially to DnaJ; upon interaction with the DnaJ-bound protein, DnaK hydrolyzes its bound ATP, resulting in the formation of a stable complex. GrpE releases ADP from DnaK; ATP binding to DnaK triggers the release of the substrate protein, thus completing the reaction cycle. Several rounds of ATP-dependent interactions between DnaJ, DnaK and GrpE are required for fully efficient folding. This Synechococcus elongatus (strain ATCC 33912 / PCC 7942 / FACHB-805) (Anacystis nidulans R2) protein is Protein GrpE.